The chain runs to 452 residues: Probable phosphoglucosamine mutase (452 aa).

The active-site Phosphoserine intermediate is the Ser-96. Ser-96, Asp-235, Asp-237, and Asp-239 together coordinate Mg(2+). Ser-96 is subject to Phosphoserine.

It belongs to the phosphohexose mutase family. Requires Mg(2+) as cofactor. In terms of processing, activated by phosphorylation.

The enzyme catalyses alpha-D-glucosamine 1-phosphate = D-glucosamine 6-phosphate. Functionally, catalyzes the conversion of glucosamine-6-phosphate to glucosamine-1-phosphate. This chain is Probable phosphoglucosamine mutase, found in Methanopyrus kandleri (strain AV19 / DSM 6324 / JCM 9639 / NBRC 100938).